Consider the following 150-residue polypeptide: SsrA-binding protein (150 aa).

This sequence belongs to the SmpB family.

The protein resides in the cytoplasm. Required for rescue of stalled ribosomes mediated by trans-translation. Binds to transfer-messenger RNA (tmRNA), required for stable association of tmRNA with ribosomes. tmRNA and SmpB together mimic tRNA shape, replacing the anticodon stem-loop with SmpB. tmRNA is encoded by the ssrA gene; the 2 termini fold to resemble tRNA(Ala) and it encodes a 'tag peptide', a short internal open reading frame. During trans-translation Ala-aminoacylated tmRNA acts like a tRNA, entering the A-site of stalled ribosomes, displacing the stalled mRNA. The ribosome then switches to translate the ORF on the tmRNA; the nascent peptide is terminated with the 'tag peptide' encoded by the tmRNA and targeted for degradation. The ribosome is freed to recommence translation, which seems to be the essential function of trans-translation. This chain is SsrA-binding protein, found in Magnetococcus marinus (strain ATCC BAA-1437 / JCM 17883 / MC-1).